We begin with the raw amino-acid sequence, 518 residues long: Membrane-bound lytic murein transglycosylase F (518 aa).

The signal sequence occupies residues 1 to 21; sequence MKKLKINYLFIGILALLLAVA. A non-LT domain region spans residues 22-269; that stretch reads LWPSIPWFGK…RIEEKYLGHG (248 aa). Positions 270 to 518 are LT domain; sequence DDFDYVDTRT…SRKGSEEKQN (249 aa). Glutamate 314 is an active-site residue.

This sequence in the N-terminal section; belongs to the bacterial solute-binding protein 3 family. The protein in the C-terminal section; belongs to the transglycosylase Slt family.

The protein resides in the cell outer membrane. It carries out the reaction Exolytic cleavage of the (1-&gt;4)-beta-glycosidic linkage between N-acetylmuramic acid (MurNAc) and N-acetylglucosamine (GlcNAc) residues in peptidoglycan, from either the reducing or the non-reducing ends of the peptidoglycan chains, with concomitant formation of a 1,6-anhydrobond in the MurNAc residue.. Its function is as follows. Murein-degrading enzyme that degrades murein glycan strands and insoluble, high-molecular weight murein sacculi, with the concomitant formation of a 1,6-anhydromuramoyl product. Lytic transglycosylases (LTs) play an integral role in the metabolism of the peptidoglycan (PG) sacculus. Their lytic action creates space within the PG sacculus to allow for its expansion as well as for the insertion of various structures such as secretion systems and flagella. The polypeptide is Membrane-bound lytic murein transglycosylase F (Shigella dysenteriae serotype 1 (strain Sd197)).